Consider the following 524-residue polypeptide: Alkaline phosphatase, tissue-nonspecific isozyme (524 aa).

A signal peptide spans 1 to 17 (MISPFLLLAIGTCFASS). D60 is a binding site for Mg(2+). The Zn(2+) site is built by D60 and S110. The active-site Phosphoserine intermediate is the S110. S110 is subject to Phosphoserine. The cysteines at positions 139 and 201 are disulfide-linked. N140 is a glycosylation site (N-linked (GlcNAc...) asparagine). T173 provides a ligand contact to Mg(2+). N230 is a glycosylation site (N-linked (GlcNAc...) asparagine). E235 contacts Ca(2+). N-linked (GlcNAc...) asparagine glycosylation is present at N271. Residues F290 and E291 each contribute to the Ca(2+) site. N303 carries an N-linked (GlcNAc...) asparagine glycan. Residue D306 participates in Ca(2+) binding. E332 lines the Mg(2+) pocket. Residues D337, H341, D378, and H379 each contribute to the Zn(2+) site. An N-linked (GlcNAc...) asparagine glycan is attached at N430. A Zn(2+)-binding site is contributed by H454. An intrachain disulfide couples C489 to C497. The GPI-anchor amidated serine moiety is linked to residue S499. The propeptide at 500-524 (ASSSGSPSPGPLLLLLALLPLGSLF) is removed in mature form.

The protein belongs to the alkaline phosphatase family. In terms of assembly, homodimer. It depends on Mg(2+) as a cofactor. Zn(2+) serves as cofactor. Requires Ca(2+) as cofactor. N-glycosylated.

It is found in the cell membrane. The protein resides in the extracellular vesicle membrane. Its subcellular location is the mitochondrion membrane. The protein localises to the mitochondrion intermembrane space. The enzyme catalyses a phosphate monoester + H2O = an alcohol + phosphate. The catalysed reaction is diphosphate + H2O = 2 phosphate + H(+). It carries out the reaction pyridoxal 5'-phosphate + H2O = pyridoxal + phosphate. It catalyses the reaction phosphoethanolamine + H2O = ethanolamine + phosphate. The enzyme catalyses N-phosphocreatine + H2O = creatine + phosphate. The catalysed reaction is ATP + H2O = ADP + phosphate + H(+). It carries out the reaction ADP + H2O = AMP + phosphate + H(+). It catalyses the reaction AMP + H2O = adenosine + phosphate. Phosphatase activity is specifically inhibited by 5-((5-chloro-2-methoxyphenyl)sulfonamido)nicotinamide (SBI-425). Its function is as follows. Alkaline phosphatase that metabolizes various phosphate compounds and plays a key role in skeletal mineralization and adaptive thermogenesis. Has broad substrate specificity and can hydrolyze a considerable variety of compounds: however, only a few substrates, such as diphosphate (inorganic pyrophosphate; PPi), pyridoxal 5'-phosphate (PLP) and N-phosphocreatine are natural substrates. Plays an essential role in skeletal and dental mineralization via its ability to hydrolyze extracellular diphosphate, a potent mineralization inhibitor, to phosphate: it thereby promotes hydroxyapatite crystal formation and increases inorganic phosphate concentration. Acts in a non-redundant manner with PHOSPHO1 in skeletal mineralization: while PHOSPHO1 mediates the initiation of hydroxyapatite crystallization in the matrix vesicles (MVs), ALPL/TNAP catalyzes the spread of hydroxyapatite crystallization in the extracellular matrix. Also promotes dephosphorylation of osteopontin (SSP1), an inhibitor of hydroxyapatite crystallization in its phosphorylated state; it is however unclear whether ALPL/TNAP mediates SSP1 dephosphorylation via a direct or indirect manner. Catalyzes dephosphorylation of PLP to pyridoxal (PL), the transportable form of vitamin B6, in order to provide a sufficient amount of PLP in the brain, an essential cofactor for enzymes catalyzing the synthesis of diverse neurotransmitters. Additionally, also able to mediate ATP degradation in a stepwise manner to adenosine, thereby regulating the availability of ligands for purinergic receptors. Also capable of dephosphorylating microbial products, such as lipopolysaccharides (LPS) as well as other phosphorylated small-molecules, such as poly-inosine:cytosine (poly I:C). Acts as a key regulator of adaptive thermogenesis as part of the futile creatine cycle: localizes to the mitochondria of thermogenic fat cells and acts by mediating hydrolysis of N-phosphocreatine to initiate a futile cycle of creatine dephosphorylation and phosphorylation. During the futile creatine cycle, creatine and N-phosphocreatine are in a futile cycle, which dissipates the high energy charge of N-phosphocreatine as heat without performing any mechanical or chemical work. The sequence is that of Alkaline phosphatase, tissue-nonspecific isozyme (ALPL) from Bos taurus (Bovine).